A 61-amino-acid polypeptide reads, in one-letter code: Photosystem II reaction center protein K (61 aa).

The propeptide occupies 1–24; that stretch reads MLNIFNLICICFNSALFSSTFLVA. Residues 40-60 traverse the membrane as a helical segment; sequence MPVIPLFFLLLAFVWQAAVSF.

Belongs to the PsbK family. PSII is composed of 1 copy each of membrane proteins PsbA, PsbB, PsbC, PsbD, PsbE, PsbF, PsbH, PsbI, PsbJ, PsbK, PsbL, PsbM, PsbT, PsbX, PsbY, PsbZ, Psb30/Ycf12, at least 3 peripheral proteins of the oxygen-evolving complex and a large number of cofactors. It forms dimeric complexes.

It is found in the plastid. It localises to the chloroplast thylakoid membrane. Functionally, one of the components of the core complex of photosystem II (PSII). PSII is a light-driven water:plastoquinone oxidoreductase that uses light energy to abstract electrons from H(2)O, generating O(2) and a proton gradient subsequently used for ATP formation. It consists of a core antenna complex that captures photons, and an electron transfer chain that converts photonic excitation into a charge separation. The protein is Photosystem II reaction center protein K of Sinapis alba (White mustard).